Consider the following 87-residue polypeptide: Small ribosomal subunit protein uS19m (87 aa).

Belongs to the universal ribosomal protein uS19 family.

It localises to the mitochondrion. The polypeptide is Small ribosomal subunit protein uS19m (mrps19) (Dictyostelium citrinum (Slime mold)).